The primary structure comprises 68 residues: Basic phospholipase A2 homolog BdipTx-I (68 aa).

Cysteine 28 and cysteine 44 form a disulfide bridge.

This sequence belongs to the phospholipase A2 family. Group II subfamily. K49 sub-subfamily. Expressed by the venom gland.

The protein resides in the secreted. Its function is as follows. Snake venom phospholipase A2 (PLA2) that lacks enzymatic activity. Is myotoxic, induces edema, and causes systemic effects (renal changes that lead to proteinuria) on mice. A model of myotoxic mechanism has been proposed: an apo Lys49-PLA2 is activated by the entrance of a hydrophobic molecule (e.g. fatty acid) at the hydrophobic channel of the protein leading to a reorientation of a monomer. This reorientation causes a transition between 'inactive' to 'active' states, causing alignment of C-terminal and membrane-docking sites (MDoS) side-by-side and putting the membrane-disruption sites (MDiS) in the same plane, exposed to solvent and in a symmetric position for both monomers. The MDoS region stabilizes the toxin on membrane by the interaction of charged residues with phospholipid head groups. Subsequently, the MDiS region destabilizes the membrane with penetration of hydrophobic residues. This insertion causes a disorganization of the membrane, allowing an uncontrolled influx of ions (i.e. calcium and sodium), and eventually triggering irreversible intracellular alterations and cell death. The sequence is that of Basic phospholipase A2 homolog BdipTx-I from Bothrops diporus (Chaco lancehead).